The primary structure comprises 185 residues: Elongation factor P (185 aa).

It belongs to the elongation factor P family.

The protein localises to the cytoplasm. Its pathway is protein biosynthesis; polypeptide chain elongation. Its function is as follows. Involved in peptide bond synthesis. Stimulates efficient translation and peptide-bond synthesis on native or reconstituted 70S ribosomes in vitro. Probably functions indirectly by altering the affinity of the ribosome for aminoacyl-tRNA, thus increasing their reactivity as acceptors for peptidyl transferase. The polypeptide is Elongation factor P (Streptococcus pyogenes serotype M5 (strain Manfredo)).